Here is an 83-residue protein sequence, read N- to C-terminus: Alpha-elapitoxin-Ppr1 (83 aa).

A signal peptide spans 1–21; that stretch reads MKTLLLTLVVVTIVCLDLGYT. 4 cysteine pairs are disulfide-bonded: Cys-24/Cys-45, Cys-38/Cys-62, Cys-64/Cys-75, and Cys-76/Cys-81.

This sequence belongs to the three-finger toxin family. Short-chain subfamily. Type I alpha-neurotoxin sub-subfamily. Expressed by the venom gland.

It localises to the secreted. Bird-specific neurotoxin (tested on chicken) that acts as a pseudo-irreversible antagonist at the nicotinic acetylcholine receptor (nAChR) of the skeletal neuromuscular junction. Has no significant effect on the electrically-induced twitches of the rat isolated phrenic nerve-diaphragm preparation. The protein is Alpha-elapitoxin-Ppr1 of Pseudechis porphyriacus (Red-bellied black snake).